Consider the following 170-residue polypeptide: Transcription factor E (170 aa).

The region spanning 1–93 (MKDAYLYVVE…AWYVDDEIIR (93 aa)) is the HTH TFE/IIEalpha-type domain.

Belongs to the TFE family. As to quaternary structure, monomer. Interaction with RNA polymerase subunits RpoF and RpoE is necessary for Tfe stimulatory transcription activity. Able to interact with Tbp and RNA polymerase in the absence of DNA promoter. Interacts both with the preinitiation and elongation complexes.

Transcription factor that plays a role in the activation of archaeal genes transcribed by RNA polymerase. Facilitates transcription initiation by enhancing TATA-box recognition by TATA-box-binding protein (Tbp), and transcription factor B (Tfb) and RNA polymerase recruitment. Not absolutely required for transcription in vitro, but particularly important in cases where Tbp or Tfb function is not optimal. It dynamically alters the nucleic acid-binding properties of RNA polymerases by stabilizing the initiation complex and destabilizing elongation complexes. Seems to translocate with the RNA polymerase following initiation and acts by binding to the non template strand of the transcription bubble in elongation complexes. In Pyrobaculum arsenaticum (strain DSM 13514 / JCM 11321 / PZ6), this protein is Transcription factor E.